An 889-amino-acid polypeptide reads, in one-letter code: A disintegrin and metalloproteinase with thrombospondin motifs 8 (889 aa).

Positions 1-26 (MLPAPAAPRWPPLLLLLLLLLPLARG) are cleaved as a signal peptide. The propeptide occupies 27–213 (APARPAAGGQ…PLGATSRTKR (187 aa)). Residues 138 to 210 (QGAGGSLAQP…PPPPLGATSR (73 aa)) form a disordered region. Basic and acidic residues predominate over residues 173 to 183 (EGQRQERGDHQ). Residues 184–197 (EDSEEESQEEEAEG) show a composition bias toward acidic residues. The Peptidase M12B domain occupies 219-429 (RFVETLLVAD…GHGDCLLDAP (211 aa)). Cystine bridges form between Cys294–Cys347, Cys323–Cys329, Cys341–Cys424, Cys379–Cys408, Cys452–Cys477, Cys463–Cys486, Cys472–Cys507, Cys501–Cys512, Cys538–Cys575, Cys542–Cys580, and Cys553–Cys565. An N-linked (GlcNAc...) asparagine glycan is attached at Asn344. His363 is a binding site for Zn(2+). Glu364 is a catalytic residue. Zn(2+)-binding residues include His367 and His373. N-linked (GlcNAc...) asparagine glycosylation is found at Asn400, Asn465, and Asn490. In terms of domain architecture, Disintegrin spans 438 to 525 (GLPGRMALYQ…EEVERPKPVA (88 aa)). Residues 526–581 (DGGWAPWGPWGECSRTCGGGVQFSHRECKDPEPQNGGRYCLGRRAKYQSCHTEECP) form the TSP type-1 1 domain. Asn599 carries an N-linked (GlcNAc...) asparagine glycan. The interval 690–831 (RKVSGSLTPT…RATTNIIQPL (142 aa)) is spacer. In terms of domain architecture, TSP type-1 2 spans 833 to 888 (HAQWVLGDWSECSSTCGAGWQRRTVECRDPSGQASATCNKALKPEDAKPCESQLCP).

Requires Zn(2+) as cofactor. The precursor is cleaved by a furin endopeptidase. In terms of processing, glycosylated. Can be O-fucosylated by POFUT2 on a serine or a threonine residue found within the consensus sequence C1-X(2)-(S/T)-C2-G of the TSP type-1 repeat domains where C1 and C2 are the first and second cysteine residue of the repeat, respectively. Fucosylated repeats can then be further glycosylated by the addition of a beta-1,3-glucose residue by the glucosyltransferase, B3GALTL. Fucosylation mediates the efficient secretion of ADAMTS family members. Can also be C-glycosylated with one or two mannose molecules on tryptophan residues within the consensus sequence W-X-X-W of the TPRs, and N-glycosylated. These other glycosylations can also facilitate secretion. Highly expressed in adult and fetal lung, lower expression in brain, placenta, heart, stomach and fetal brain and kidney.

The protein localises to the secreted. It is found in the extracellular space. Its subcellular location is the extracellular matrix. In terms of biological role, has anti-angiogenic properties. The sequence is that of A disintegrin and metalloproteinase with thrombospondin motifs 8 (ADAMTS8) from Homo sapiens (Human).